The primary structure comprises 345 residues: Transcription factor MYB106 (345 aa).

2 consecutive HTH myb-type domains span residues 9–61 and 62–116; these read KAGL…TNYL and RPDI…KKRL. 2 consecutive DNA-binding regions (H-T-H motif) follow at residues 37-61 and 89-112; these read WRSL…TNYL and WSAI…NTHL.

As to expression, expressed in trichomes, stems, carpels, petals and stamens.

The protein resides in the nucleus. Functions as a repressor of epidermal cell outgrowth and negatively regulate trichome branch formation. Acts both as a positive and a negative regulator of cellular outgrowth. Promotes both trichome expansion and branch formation. Coordinately with WIN1/SHN1, participates in the regulation of cuticle biosynthesis and wax accumulation in reproductive organs and trichomes. Functions in cuticle nanoridge formation in petals and stamens, and in morphogenesis of petal conical cells and trichomes. May play a role in the regulation of cuticle formation in vegetative organs. The polypeptide is Transcription factor MYB106 (Arabidopsis thaliana (Mouse-ear cress)).